A 694-amino-acid chain; its full sequence is GRB2-associated-binding protein 1 (694 aa).

N-acetylserine is present on S2. The 112-residue stretch at 5 to 116 (EVVCSGWLRK…WVRCICDICG (112 aa)) folds into the PH domain. Over residues 194-203 (PEPTRTHADS) the composition is skewed to basic and acidic residues. Residues 194–231 (PEPTRTHADSAKSTSSETDCNDNVPSHKNPASSQSKHG) are disordered. Polar residues predominate over residues 204–230 (AKSTSSETDCNDNVPSHKNPASSQSKH). Phosphoserine is present on residues S251, S253, S266, and S304. The interval 309 to 378 (IPPTPGNTYQ…TDSSYCIPTA (70 aa)) is disordered. The span at 358–374 (DTCSITRTASDTDSSYC) shows a compositional bias: polar residues. T387 is modified (phosphothreonine). Residues S402 and S454 each carry the phosphoserine modification. Disordered regions lie at residues 492–532 (PAHM…VKPA) and 560–656 (DSSR…ADER). Positions 594 to 611 (PNLSSEDSNLFGSNSLDG) are enriched in polar residues. Y627 is modified (phosphotyrosine). A Phosphothreonine modification is found at T638. Position 651 is a phosphoserine (S651). Y659 is subject to Phosphotyrosine. Positions 668 to 694 (LALKSTREAWTDGRQSTESETPAKNVK) are disordered. The span at 672–684 (STREAWTDGRQST) shows a compositional bias: basic and acidic residues. At S683 the chain carries Phosphoserine. A compositionally biased stretch (polar residues) spans 685-694 (ESETPAKNVK).

It belongs to the GAB family. In terms of assembly, identified in a complex containing FRS2, GRB2, GAB1, PIK3R1 and SOS1. Forms a tripartite complex containing GAB1, METTL13 and SPRY2. Within the complex interacts with METTL13. Interacts with GRB2 and with other SH2-containing proteins. Interacts with phosphorylated LAT2. Interacts with PTPRJ. Interacts (phosphorylated) with PTPN11. Interacts with HCK. Phosphorylated in response to FGFR1 activation. Phosphorylated on tyrosine residue(s) by the epidermal growth factor receptor (EGFR) and the insulin receptor (INSR). Tyrosine phosphorylation of GAB1 mediates interaction with several proteins that contain SH2 domains. Phosphorylated on tyrosine residues by HCK upon IL6 signaling.

Functionally, adapter protein that plays a role in intracellular signaling cascades triggered by activated receptor-type kinases. Plays a role in FGFR1 signaling. Probably involved in signaling by the epidermal growth factor receptor (EGFR) and the insulin receptor (INSR). Involved in the MET/HGF-signaling pathway. The protein is GRB2-associated-binding protein 1 (GAB1) of Bos taurus (Bovine).